Reading from the N-terminus, the 412-residue chain is Serine hydroxymethyltransferase (412 aa).

(6S)-5,6,7,8-tetrahydrofolate-binding positions include L120 and 124–126 (GHL). Residue K229 is modified to N6-(pyridoxal phosphate)lysine. 352-354 (SPF) contacts (6S)-5,6,7,8-tetrahydrofolate.

Belongs to the SHMT family. Homodimer. Requires pyridoxal 5'-phosphate as cofactor.

It localises to the cytoplasm. It carries out the reaction (6R)-5,10-methylene-5,6,7,8-tetrahydrofolate + glycine + H2O = (6S)-5,6,7,8-tetrahydrofolate + L-serine. It participates in one-carbon metabolism; tetrahydrofolate interconversion. The protein operates within amino-acid biosynthesis; glycine biosynthesis; glycine from L-serine: step 1/1. Catalyzes the reversible interconversion of serine and glycine with tetrahydrofolate (THF) serving as the one-carbon carrier. This reaction serves as the major source of one-carbon groups required for the biosynthesis of purines, thymidylate, methionine, and other important biomolecules. Also exhibits THF-independent aldolase activity toward beta-hydroxyamino acids, producing glycine and aldehydes, via a retro-aldol mechanism. This is Serine hydroxymethyltransferase from Ruminiclostridium cellulolyticum (strain ATCC 35319 / DSM 5812 / JCM 6584 / H10) (Clostridium cellulolyticum).